Here is a 313-residue protein sequence, read N- to C-terminus: MNLKSKDLLGLRDISAEEIEYILNTAKTMKCIVTSNNKKTAHLQGKSIITLFYENSTRTRLSFELASKYMGASAANISASSSSVQKGETLIDTGKTIDSMGSDIIIMRHPMSGAPHLLAKNVKSSVINAGDGMNEHPTQALLDMFTILEKKGTLKGLKVAIIGDILHSRVARSNIWGLTKMGAEVNVAGPATLIPPEIEKIGVNVFSTVQEAMLDADVVMGLRIQLERQKKGLFPTIREYSRFFGVDDKRLKLAKEDAIVLHPGPVNRGVELSSSVTDGEQSFIDEQVTNGVAVRMALLYLLTRRGIVNEVTD.

Carbamoyl phosphate contacts are provided by Arg-58 and Thr-59. An L-aspartate-binding site is contributed by Lys-86. Carbamoyl phosphate is bound by residues Arg-108, His-136, and Gln-139. 2 residues coordinate L-aspartate: Arg-169 and Arg-223. Gly-264 and Pro-265 together coordinate carbamoyl phosphate.

The protein belongs to the aspartate/ornithine carbamoyltransferase superfamily. ATCase family. As to quaternary structure, heterododecamer (2C3:3R2) of six catalytic PyrB chains organized as two trimers (C3), and six regulatory PyrI chains organized as three dimers (R2).

The enzyme catalyses carbamoyl phosphate + L-aspartate = N-carbamoyl-L-aspartate + phosphate + H(+). It participates in pyrimidine metabolism; UMP biosynthesis via de novo pathway; (S)-dihydroorotate from bicarbonate: step 2/3. Functionally, catalyzes the condensation of carbamoyl phosphate and aspartate to form carbamoyl aspartate and inorganic phosphate, the committed step in the de novo pyrimidine nucleotide biosynthesis pathway. The protein is Aspartate carbamoyltransferase catalytic subunit of Ruminiclostridium cellulolyticum (strain ATCC 35319 / DSM 5812 / JCM 6584 / H10) (Clostridium cellulolyticum).